Consider the following 108-residue polypeptide: uncharacterized protein (108 aa).

Thr56 bears the Phosphothreonine mark. The segment at 89–108 is disordered; sequence AQAKGTEQAEALKKGTSKWF.

It is found in the cytoplasm. This is an uncharacterized protein from Schizosaccharomyces pombe (strain 972 / ATCC 24843) (Fission yeast).